The following is a 118-amino-acid chain: Late cornified envelope protein 1F (118 aa).

A compositionally biased stretch (low complexity) spans Met1–Cys10. 2 disordered regions span residues Met1–Lys23 and Arg82–Cys118. Residues Gln11–Lys23 are compositionally biased toward pro residues. A compositionally biased stretch (low complexity) spans Cys95–Ser104. Residues Cys105–Cys118 are compositionally biased toward gly residues.

The protein belongs to the LCE family. In terms of tissue distribution, skin-specific. Expression was readily detected in adult trunk skin, adult arm skin, fetal skin, penal skin, vulva, esophagus and tongue. Not expressed in the cervix, rectum, lung, colon, or placenta. Expression is observed in the fibroblasts.

Functionally, precursors of the cornified envelope of the stratum corneum. The polypeptide is Late cornified envelope protein 1F (LCE1F) (Homo sapiens (Human)).